The primary structure comprises 319 residues: 2,3,4,5-tetrahydropyridine-2,6-dicarboxylate N-succinyltransferase (319 aa).

Mg(2+) contacts are provided by D167 and E184. Catalysis depends on E200, which acts as the Acyl-anhydride intermediate. Residues R202, G217, S220, A243, 258 to 259 (EA), and K278 each bind succinyl-CoA.

It belongs to the type 2 tetrahydrodipicolinate N-succinyltransferase family. As to quaternary structure, homotrimer.

The protein localises to the cytoplasm. It carries out the reaction (S)-2,3,4,5-tetrahydrodipicolinate + succinyl-CoA + H2O = (S)-2-succinylamino-6-oxoheptanedioate + CoA. It participates in amino-acid biosynthesis; L-lysine biosynthesis via DAP pathway; LL-2,6-diaminopimelate from (S)-tetrahydrodipicolinate (succinylase route): step 1/3. Its function is as follows. Catalyzes the conversion of the cyclic tetrahydrodipicolinate (THDP) into the acyclic N-succinyl-L-2-amino-6-oxopimelate using succinyl-CoA. This chain is 2,3,4,5-tetrahydropyridine-2,6-dicarboxylate N-succinyltransferase, found in Salinispora tropica (strain ATCC BAA-916 / DSM 44818 / JCM 13857 / NBRC 105044 / CNB-440).